The following is a 274-amino-acid chain: 2,3,4,5-tetrahydropyridine-2,6-dicarboxylate N-succinyltransferase (274 aa).

R106 and D143 together coordinate substrate.

Belongs to the transferase hexapeptide repeat family. Homotrimer.

Its subcellular location is the cytoplasm. The catalysed reaction is (S)-2,3,4,5-tetrahydrodipicolinate + succinyl-CoA + H2O = (S)-2-succinylamino-6-oxoheptanedioate + CoA. It functions in the pathway amino-acid biosynthesis; L-lysine biosynthesis via DAP pathway; LL-2,6-diaminopimelate from (S)-tetrahydrodipicolinate (succinylase route): step 1/3. This is 2,3,4,5-tetrahydropyridine-2,6-dicarboxylate N-succinyltransferase from Paracidovorax citrulli (strain AAC00-1) (Acidovorax citrulli).